The following is a 169-amino-acid chain: Podoplanin (169 aa).

The signal sequence occupies residues methionine 1–glycine 22. At alanine 23–leucine 138 the chain is on the extracellular side. Threonine 25 is a glycosylation site (O-linked (GalNAc...) threonine). Positions aspartate 37–serine 69 are disordered. The O-linked (GalNAc...) serine glycan is linked to serine 38. O-linked (GalNAc...) threonine glycans are attached at residues threonine 41 and threonine 44. A glycan (O-linked (GalNAc...) serine) is linked at serine 47. Residues threonine 50, threonine 59, threonine 63, threonine 72, threonine 76, threonine 79, threonine 83, threonine 92, threonine 96, threonine 106, threonine 107, threonine 108, threonine 113, threonine 126, and threonine 127 are each glycosylated (O-linked (GalNAc...) threonine). A helical membrane pass occupies residues valine 139–valine 159. The requires for dimerization and lipid rafts association stretch occupies residues glycine 140–glycine 144. Residues alanine 160 to proline 169 lie on the Cytoplasmic side of the membrane. Residues arginine 161 to lysine 162 are requires for interaction with MSN and EZR.

Belongs to the podoplanin family. As to quaternary structure, homodimer. Interacts with CLEC1B; the interaction is independent of CLEC1B glycosylation and activates CLEC1B; the interaction is dependent of sialic acid on O-glycans. Interacts with CD9; this interaction is homophilic and attenuates platelet aggregation and pulmonary metastasis induced by PDPN. Interacts with LGALS8; the interaction is glycosylation-dependent; may participate in connection of the lymphatic endothelium to the surrounding extracellular matrix. Interacts with HSPA9. Interacts (via extracellular domain) with CD44; this interaction is required for PDPN-mediated directional migration and regulation of lamellipodia extension/stabilization during cell spreading and migration. Interacts (via cytoplasmic domain) with MSN and EZR; activates RHOA and promotes epithelial-mesenchymal transition. Interacts with CCL21; relocalized PDPN to the basolateral membrane. Extensively O-glycosylated. Contains sialic acid residues. O-glycosylation is necessary for platelet aggregation activity. Disialylated at Thr-59; sialic acid is critical for platelet-aggregating activity and for CLEC1B interaction. Post-translationally, the N-terminus is blocked.

The protein localises to the membrane. Its subcellular location is the cell projection. The protein resides in the filopodium membrane. It localises to the lamellipodium membrane. It is found in the microvillus membrane. The protein localises to the ruffle membrane. Its subcellular location is the membrane raft. The protein resides in the apical cell membrane. It localises to the basolateral cell membrane. It is found in the invadopodium. Mediates effects on cell migration and adhesion through its different partners. During development plays a role in blood and lymphatic vessels separation by binding CLEC1B, triggering CLEC1B activation in platelets and leading to platelet activation and/or aggregation. Interaction with CD9, on the contrary, attenuates platelet aggregation and pulmonary metastasis induced by PDPN. Mediates effects on cell migration and adhesion through its different partners. Through MSN or EZR interaction promotes epithelial-mesenchymal transition (EMT) leading to ERZ phosphorylation and triggering RHOA activation leading to cell migration increase and invasiveness. Interaction with CD44 promotes directional cell migration in epithelial and tumor cells. In lymph nodes (LNs), controls fibroblastic reticular cells (FRCs) adhesion to the extracellular matrix (ECM) and contraction of the actomyosin by maintaining ERM proteins (EZR; MSN and RDX) and MYL9 activation through association with unknown transmembrane proteins. Engagement of CLEC1B by PDPN promotes FRCs relaxation by blocking lateral membrane interactions leading to reduction of ERM proteins (EZR; MSN and RDX) and MYL9 activation. Through binding with LGALS8 may participate in connection of the lymphatic endothelium to the surrounding extracellular matrix. In keratinocytes, induces changes in cell morphology showing an elongated shape, numerous membrane protrusions, major reorganization of the actin cytoskeleton, increased motility and decreased cell adhesion. Controls invadopodia stability and maturation leading to efficient degradation of the extracellular matrix (ECM) in tumor cells through modulation of RHOC activity in order to activate ROCK1/ROCK2 and LIMK1/LIMK2 and inactivation of CFL1. Required for normal lung cell proliferation and alveolus formation at birth. Does not function as a water channel or as a regulator of aquaporin-type water channels. Does not have any effect on folic acid or amino acid transport. This is Podoplanin (PDPN) from Canis lupus familiaris (Dog).